We begin with the raw amino-acid sequence, 236 residues long: Orotidine 5'-phosphate decarboxylase (236 aa).

Residues Asp-17, Lys-39, 66–75, Thr-125, Arg-187, Gln-196, Gly-216, and Arg-217 contribute to the substrate site; that span reads DLKFYDIPNT. Lys-68 functions as the Proton donor in the catalytic mechanism.

It belongs to the OMP decarboxylase family. Type 1 subfamily. Homodimer.

The enzyme catalyses orotidine 5'-phosphate + H(+) = UMP + CO2. It participates in pyrimidine metabolism; UMP biosynthesis via de novo pathway; UMP from orotate: step 2/2. Catalyzes the decarboxylation of orotidine 5'-monophosphate (OMP) to uridine 5'-monophosphate (UMP). This is Orotidine 5'-phosphate decarboxylase from Buchnera aphidicola subsp. Baizongia pistaciae (strain Bp).